The primary structure comprises 548 residues: Probable sucrose-6-phosphate hydrolase (548 aa).

Substrate-binding positions include 105 to 108 (LLND), Gln-124, 167 to 168 (FS), 228 to 229 (RD), and Glu-283. The active site involves Asp-108.

The protein belongs to the glycosyl hydrolase 32 family.

It is found in the cytoplasm. It carries out the reaction Hydrolysis of terminal non-reducing beta-D-fructofuranoside residues in beta-D-fructofuranosides.. It functions in the pathway glycan biosynthesis; sucrose metabolism. In terms of biological role, enables the bacterium to metabolize sucrose as a sole carbon source. This is Probable sucrose-6-phosphate hydrolase from Vibrio cholerae serotype O1 (strain ATCC 39315 / El Tor Inaba N16961).